A 282-amino-acid polypeptide reads, in one-letter code: Benzoyl-CoA reductase subunit D (282 aa).

[4Fe-4S] cluster contacts are provided by Cys130 and Cys169.

In terms of assembly, heterotetramer composed of A, B, C, and D subunits. Requires [4Fe-4S] cluster as cofactor.

It carries out the reaction cyclohexa-1,5-diene-1-carbonyl-CoA + oxidized 2[4Fe-4S]-[ferredoxin] + 2 ADP + 2 phosphate = reduced 2[4Fe-4S]-[ferredoxin] + benzoyl-CoA + 2 ATP + 2 H2O. The enzyme catalyses 3-hydroxybenzoyl-CoA + AH2 + 2 ATP + 2 H2O = 3-hydroxycyclohexa-1,5-diene-1-carbonyl-CoA + A + 2 ADP + 2 phosphate + 2 H(+). Catalyzes the anaerobic reduction of benzoyl-CoA and 3-hydroxybenzoyl-CoA to form cyclohexa-1,5-diene-1-carbonyl-CoA and 3-hydroxycyclohexa-1,5-diene-1-carbonyl-CoA, respectively. The enzyme also reduces other benzoyl-CoA analogs with small substituents at the aromatic ring. The protein is Benzoyl-CoA reductase subunit D (bcrD) of Thauera aromatica.